We begin with the raw amino-acid sequence, 214 residues long: Ribosomal RNA small subunit methyltransferase G (214 aa).

S-adenosyl-L-methionine-binding positions include Gly81, Met86, 132 to 133, and Arg147; that span reads VE.

It belongs to the methyltransferase superfamily. RNA methyltransferase RsmG family.

The protein localises to the cytoplasm. The catalysed reaction is guanosine(527) in 16S rRNA + S-adenosyl-L-methionine = N(7)-methylguanosine(527) in 16S rRNA + S-adenosyl-L-homocysteine. Functionally, specifically methylates the N7 position of guanine in position 527 of 16S rRNA. The polypeptide is Ribosomal RNA small subunit methyltransferase G (Ectopseudomonas mendocina (strain ymp) (Pseudomonas mendocina)).